We begin with the raw amino-acid sequence, 817 residues long: Phospholipase D alpha 2 (817 aa).

Residues 1 to 130 enclose the C2 domain; the sequence is MAHLLLHGTL…LSGEAIERRL (130 aa). A Ca(2+)-binding site is contributed by Asp192. The 40-residue stretch at 333 to 372 folds into the PLD phosphodiesterase 1 domain; sequence YMITHHQKTVIVDHDMPVPRGGGSRRIVSFVGGLDLCDGR. Residues His338, Lys340, and Asp345 contribute to the active site. His338 is a binding site for a 1,2-diacyl-sn-glycero-3-phosphate. Positions 378 and 412 each coordinate Ca(2+). A 1,2-diacyl-sn-glycero-3-phosphate is bound by residues Gln529 and His668. In terms of domain architecture, PLD phosphodiesterase 2 spans 663-690; the sequence is FMIYVHSKMMIVDDEYIIVGSANINQRS. Catalysis depends on residues His668, Lys670, and Asp675. Glu730 lines the Ca(2+) pocket.

It belongs to the phospholipase D family. C2-PLD subfamily. Requires Ca(2+) as cofactor.

The catalysed reaction is a 1,2-diacyl-sn-glycero-3-phosphocholine + H2O = a 1,2-diacyl-sn-glycero-3-phosphate + choline + H(+). Hydrolyzes glycerol-phospholipids at the terminal phosphodiesteric bond. Plays an important role in various cellular processes. The protein is Phospholipase D alpha 2 (PLD2) of Oryza sativa subsp. japonica (Rice).